We begin with the raw amino-acid sequence, 360 residues long: Nucleoporin SEH1-B (360 aa).

6 WD repeats span residues 10-49 (DHKDLIHDVSFDFHGRRMATCSSDQSVKVWDKSENVNWHC), 55-96 (THSG…SNDK), 111-152 (DSRT…NLSQ), 160-210 (SCKL…RKYA), 217-258 (SVSD…KELS), and 276-315 (NHNSQVWRVSWNITGTVLASSGDDGTVRLWKANYMDNWKC).

It belongs to the WD repeat SEC13 family. Component of the Nup107-160 subcomplex of the nuclear pore complex (NPC). The Nup107-160 subcomplex includes NUP160, NUP133, NUP107, NUP98, NUP85, NUP43, NUP37, SEH1 and SEC13. Component of the GATOR2 subcomplex, composed of MIOS, SEC13, SEH1L, WDR24 and WDR59. The GATOR2 complex interacts with CASTOR1 and CASTOR2; the interaction is negatively regulated by arginine. The GATOR2 complex interacts with SESN1, SESN2 and SESN3; the interaction is negatively regulated by amino acids.

The protein resides in the chromosome. The protein localises to the centromere. Its subcellular location is the kinetochore. It localises to the nucleus. It is found in the nuclear pore complex. The protein resides in the lysosome membrane. Its activity is regulated as follows. The GATOR2 complex is negatively regulated by the upstream amino acid sensors CASTOR1 and SESN2, which sequester the GATOR2 complex in absence of amino acids. In the presence of abundant amino acids, GATOR2 is released from CASTOR1 and SESN2 and activated. Component of the Nup107-160 subcomplex of the nuclear pore complex (NPC). The Nup107-160 subcomplex is required for the assembly of a functional NPC. The Nup107-160 subcomplex is also required for normal kinetochore microtubule attachment, mitotic progression and chromosome segregation. This subunit plays a role in recruitment of the Nup107-160 subcomplex to the kinetochore. In terms of biological role, as a component of the GATOR2 complex, functions as an activator of the amino acid-sensing branch of the mTORC1 signaling pathway. The GATOR2 complex indirectly activates mTORC1 through the inhibition of the GATOR1 subcomplex. GATOR2 probably acts as an E3 ubiquitin-protein ligase toward GATOR1. In the presence of abundant amino acids, the GATOR2 complex mediates ubiquitination of the NPRL2 core component of the GATOR1 complex, leading to GATOR1 inactivation. In the absence of amino acids, GATOR2 is inhibited, activating the GATOR1 complex. The sequence is that of Nucleoporin SEH1-B (seh1l-b) from Xenopus laevis (African clawed frog).